We begin with the raw amino-acid sequence, 242 residues long: Response regulator GtcR (242 aa).

Residues 4-117 enclose the Response regulatory domain; it reads TILIADDEPE…EAVARIQAQL (114 aa). At Asp53 the chain carries 4-aspartylphosphate. Positions 133–233 form a DNA-binding region, ompR/PhoB-type; the sequence is TQSTTVGRLT…VRGLGYKFAS (101 aa).

Phosphorylated by GtcS.

Member of the two-component regulatory system GtcS/GtcR which may act in the control of the transcription of the grs operon which encodes the multienzymes involved in the biosynthesis of the peptide antibiotic gramicidin S. The chain is Response regulator GtcR (gtcR) from Aneurinibacillus migulanus (Bacillus migulanus).